Consider the following 177-residue polypeptide: Large ribosomal subunit protein uL6 (177 aa).

It belongs to the universal ribosomal protein uL6 family. Part of the 50S ribosomal subunit.

Functionally, this protein binds to the 23S rRNA, and is important in its secondary structure. It is located near the subunit interface in the base of the L7/L12 stalk, and near the tRNA binding site of the peptidyltransferase center. This chain is Large ribosomal subunit protein uL6, found in Leptothrix cholodnii (strain ATCC 51168 / LMG 8142 / SP-6) (Leptothrix discophora (strain SP-6)).